Reading from the N-terminus, the 86-residue chain is Putative membrane protein insertion efficiency factor (86 aa).

Residues 66 to 86 form a disordered region; it reads FSKGGFDPVPPHDGVPGKKED.

Belongs to the UPF0161 family.

The protein resides in the cell inner membrane. Functionally, could be involved in insertion of integral membrane proteins into the membrane. In Chlorobium luteolum (strain DSM 273 / BCRC 81028 / 2530) (Pelodictyon luteolum), this protein is Putative membrane protein insertion efficiency factor.